A 558-amino-acid polypeptide reads, in one-letter code: Protein NRT1/ PTR FAMILY 2.7 (558 aa).

12 helical membrane-spanning segments follow: residues Phe-31 to Ile-51, Ile-63 to Ala-83, Phe-90 to Leu-110, Leu-140 to Ala-162, Phe-178 to Val-198, Ile-204 to Phe-224, Ile-319 to Leu-339, Ile-357 to Asn-377, Val-399 to Lys-419, Val-440 to Gly-460, Ser-479 to Ile-499, and Val-518 to Trp-538.

Belongs to the major facilitator superfamily. Proton-dependent oligopeptide transporter (POT/PTR) (TC 2.A.17) family. As to expression, expressed in shoots and in the cortex of mature roots. Not expressed in root tip meristematic cells.

It is found in the cell membrane. Transporter involved in a passive nitrate efflux. Not competent for chloride transport. This chain is Protein NRT1/ PTR FAMILY 2.7 (NPF2.7), found in Arabidopsis thaliana (Mouse-ear cress).